Reading from the N-terminus, the 292-residue chain is NAD kinase (292 aa).

The active-site Proton acceptor is aspartate 73. Residues 73-74 (DG), 147-148 (NE), histidine 158, arginine 175, aspartate 177, 188-193 (TAYSLS), and glutamine 247 contribute to the NAD(+) site.

Belongs to the NAD kinase family. Requires a divalent metal cation as cofactor.

Its subcellular location is the cytoplasm. It catalyses the reaction NAD(+) + ATP = ADP + NADP(+) + H(+). Its function is as follows. Involved in the regulation of the intracellular balance of NAD and NADP, and is a key enzyme in the biosynthesis of NADP. Catalyzes specifically the phosphorylation on 2'-hydroxyl of the adenosine moiety of NAD to yield NADP. In Pectobacterium atrosepticum (strain SCRI 1043 / ATCC BAA-672) (Erwinia carotovora subsp. atroseptica), this protein is NAD kinase.